The sequence spans 649 residues: 70 kDa protein (649 aa).

4 disordered regions span residues 28–80, 257–286, 311–359, and 458–550; these read LRRG…DFSP, ALSL…AASD, TATS…SKQQ, and QSAE…PSSL. A compositionally biased stretch (polar residues) spans 268-279; it reads KSTSPCNNSQLP. The span at 330–349 shows a compositional bias: basic residues; that stretch reads RLQRSLHLHSRSPHSSHFRP. Over residues 504–515 the composition is skewed to polar residues; the sequence is DVSNSETKNCPS. 2 stretches are compositionally biased toward low complexity: residues 524 to 533 and 540 to 550; these read PNHLHPLLPG and PRQLSPSPSSL.

It belongs to the tymoviridae protein p69 family.

The chain is 70 kDa protein from Solanum lycopersicum (Tomato).